The primary structure comprises 165 residues: Cyclic pyranopterin monophosphate synthase (165 aa).

Substrate contacts are provided by residues 76–78 (LCH) and 119–120 (ME). Aspartate 134 is an active-site residue.

This sequence belongs to the MoaC family. As to quaternary structure, homohexamer; trimer of dimers.

The catalysed reaction is (8S)-3',8-cyclo-7,8-dihydroguanosine 5'-triphosphate = cyclic pyranopterin phosphate + diphosphate. It participates in cofactor biosynthesis; molybdopterin biosynthesis. Its function is as follows. Catalyzes the conversion of (8S)-3',8-cyclo-7,8-dihydroguanosine 5'-triphosphate to cyclic pyranopterin monophosphate (cPMP). The polypeptide is Cyclic pyranopterin monophosphate synthase (Photobacterium profundum (strain SS9)).